Here is a 166-residue protein sequence, read N- to C-terminus: HTH-type transcriptional regulator PetP (166 aa).

Residues aspartate 17–aspartate 152 enclose the HTH marR-type domain. Residues valine 66–aspartate 89 constitute a DNA-binding region (H-T-H motif).

Functionally, necessary for photosynthetic and respiratory growth. This is HTH-type transcriptional regulator PetP (petP) from Rhodobacter capsulatus (strain ATCC BAA-309 / NBRC 16581 / SB1003).